A 328-amino-acid polypeptide reads, in one-letter code: Biotin synthase (328 aa).

One can recognise a Radical SAM core domain in the interval 41 to 260 (TAIETASLLS…VALARILMPA (220 aa)). Residues C56, C60, and C63 each contribute to the [4Fe-4S] cluster site. The [2Fe-2S] cluster site is built by C100, C131, C191, and R264.

The protein belongs to the radical SAM superfamily. Biotin synthase family. As to quaternary structure, homodimer. It depends on [4Fe-4S] cluster as a cofactor. [2Fe-2S] cluster serves as cofactor.

It catalyses the reaction (4R,5S)-dethiobiotin + (sulfur carrier)-SH + 2 reduced [2Fe-2S]-[ferredoxin] + 2 S-adenosyl-L-methionine = (sulfur carrier)-H + biotin + 2 5'-deoxyadenosine + 2 L-methionine + 2 oxidized [2Fe-2S]-[ferredoxin]. The protein operates within cofactor biosynthesis; biotin biosynthesis; biotin from 7,8-diaminononanoate: step 2/2. Its function is as follows. Catalyzes the conversion of dethiobiotin (DTB) to biotin by the insertion of a sulfur atom into dethiobiotin via a radical-based mechanism. This chain is Biotin synthase, found in Cereibacter sphaeroides (strain ATCC 17023 / DSM 158 / JCM 6121 / CCUG 31486 / LMG 2827 / NBRC 12203 / NCIMB 8253 / ATH 2.4.1.) (Rhodobacter sphaeroides).